A 129-amino-acid polypeptide reads, in one-letter code: MVKPSLKIRKKVKKNVVEGVAHIHASFNNTIVTISDRQGNALSWATSGGVGFKGSRKSTPFAAQVAAEHAGRAALEYGVKNLEVRVKGPGPGRDSAVRALNATGFKITSITDVTPIPHNGCRPPKKRRI.

It belongs to the universal ribosomal protein uS11 family. As to quaternary structure, part of the 30S ribosomal subunit. Interacts with proteins S7 and S18. Binds to IF-3.

In terms of biological role, located on the platform of the 30S subunit, it bridges several disparate RNA helices of the 16S rRNA. Forms part of the Shine-Dalgarno cleft in the 70S ribosome. This chain is Small ribosomal subunit protein uS11, found in Nitrosomonas europaea (strain ATCC 19718 / CIP 103999 / KCTC 2705 / NBRC 14298).